Reading from the N-terminus, the 461-residue chain is MSQHHILPQHQRADLNRSICDYVQRCGAEESLVVGLRQLFGLSAEECDATRNGRDPDLLLKKWNSIIRLHRKILDLEQKCQQLTEELEAVPTEAYGKAGRGVSHVLWTPRSNPTFQLDVGASVTDIKLHPSLPIAFLATDQGKVVAYDLFNRSMPLHSTQAHMKGVTSLAVMEAENGSLLISTTSKDLQCKIWSFTDNAAFQLLRTLSSHEHIVSQSCFLRSGSDLLLATCSRDLTVKVWDTKSGWCIKSFQPHNQWVRTLELHGDYVITGSNDATIRLSHWPSGNGLSMAVMHEFPIERVLIIPMRANTAQKTEADDDQVELEYRKYDPDYSPLGFKYCISCSRDNLIVLWKIPLPKFIPHRPPQPNLLQTNFEKVHVFKGHTSWVRDIKVRGRHLFSCSDDRSIRCWDLVTGQCLKVWPEASHGFINCLSVDSDVSNDKLLRELFLSGSIDGKCNVFMR.

The stretch at 64-93 (NSIIRLHRKILDLEQKCQQLTEELEAVPTE) forms a coiled coil. WD repeat units lie at residues 118–157 (DVGA…MPLH), 161–203 (AHMK…AFQL), 209–252 (SHEH…KSFQ), 254–292 (HNQW…SMAV), 318–362 (DDQV…FIPH), 382–421 (GHTS…KVWP), and 423–461 (ASHG…VFMR).

Belongs to the WD repeat LIS1/nudF family. Self-associates. Interacts with NDL1 and dynein.

It is found in the cytoplasm. The protein resides in the cytoskeleton. The protein localises to the spindle pole. Functionally, positively regulates the activity of the minus-end directed microtubule motor protein dynein. Plays a central role in positioning the mitotic spindle at the bud neck during cell division. Targets cytoplasmic dynein to microtubule plus ends, thereby promoting dynein-mediated microtubule sliding along the bud cortex and consequently the movement of the mitotic spindle to the bud neck. This Eremothecium gossypii (strain ATCC 10895 / CBS 109.51 / FGSC 9923 / NRRL Y-1056) (Yeast) protein is Nuclear distribution protein PAC1.